The sequence spans 177 residues: RNA silencing suppressor (177 aa).

In terms of assembly, homooctamer. The eight monomers assemble into a closed ring that binds RNA.

The protein localises to the host cytoplasm. Acts as a suppressor of RNA-mediated gene silencing, also known as post-transcriptional gene silencing (PTGS), a mechanism of plant viral defense that limits the accumulation of viral RNAs. Binds to ssRNAs and dsRNAs in vitro. Also functions as a replication enhancer. The sequence is that of RNA silencing suppressor from Beta vulgaris (Sugar beet).